The following is a 461-amino-acid chain: Threonine/serine transporter ThrP (461 aa).

12 consecutive transmembrane segments (helical) span residues 17 to 37 (IELI…AAST), 40 to 60 (WAGP…FFIM), 97 to 117 (WFMW…YVQF), 123 to 143 (AQWI…LAAV), 156 to 176 (IKVT…FFGF), 201 to 221 (GFLT…LIGI), 244 to 264 (ILIF…WNEI), 278 to 298 (IGIT…ALSG), 333 to 353 (VAGV…NYII), 360 to 380 (FVYV…VILI), 401 to 421 (IMFP…LIGM), and 430 to 450 (SLFV…VFGL).

It belongs to the amino acid-polyamine-organocation (APC) superfamily.

Its subcellular location is the cell inner membrane. It catalyses the reaction L-threonine(in) + H(+)(in) = L-threonine(out) + H(+)(out). It carries out the reaction L-serine(in) + H(+)(in) = L-serine(out) + H(+)(out). Functionally, permease that mediates the proton-dependent threonine and serine uptake. This chain is Threonine/serine transporter ThrP, found in Salmonella typhi.